The sequence spans 504 residues: Zinc finger protein AEBP2 (504 aa).

Residues 1 to 219 are disordered; sequence MAAALADMAD…SRMDSEDSIS (219 aa). Alanine 2 carries the N-acetylalanine modification. The span at 16 to 30 shows a compositional bias: low complexity; that stretch reads RLSPLSPGSPGPAAR. A phosphoserine mark is found at serine 18, serine 21, and serine 24. Residues 36 to 49 are compositionally biased toward acidic residues; that stretch reads PEEEEEEDDEEAEA. A compositionally biased stretch (gly residues) spans 59-69; that stretch reads GGAGGGAGGGE. The segment covering 86–110 has biased composition (acidic residues); it reads GDEDEDEEDDEDEGSSSGGAEEESS. Over residues 129-140 the composition is skewed to low complexity; sequence SLSPGAASSSSG. Serine 131 bears the Phosphoserine mark. Basic and acidic residues predominate over residues 142–153; the sequence is GDGKEGLEEPKG. Composition is skewed to gly residues over residues 154-168 and 178-189; these read PRGG…GGGS and GDEGYGTGGGGS. Residues serine 199, serine 203, and serine 204 each carry the phosphoserine modification. Positions 202-287 are interaction with RBBP4; it reads MSSDGEPLSR…IHVDGQRGGV (86 aa). The segment at 254–279 adopts a C2H2-type 1 zinc-finger fold; that stretch reads YNCCWDQCQACFNSSPDLADHIRSIH. The C2H2-type 2; degenerate zinc-finger motif lies at 293-315; the sequence is KGCKVYNTPSTSQSWLQRHMLTH. The C2H2-type 3 zinc-finger motif lies at 321-345; the sequence is FKCVVGGCNASFASQGGLARHVPTH. Polar residues predominate over residues 345–358; it reads HFSQQNSSKVSSQP. Positions 345–387 are disordered; that stretch reads HFSQQNSSKVSSQPKAKEESPSKAGMNKRRKLKNKRRRSLPRP. The segment covering 370-385 has biased composition (basic residues); sequence MNKRRKLKNKRRRSLP. Serine 383 bears the Phosphoserine mark. The tract at residues 400-471 is interaction with SUZ12; it reads RHRAICFNLS…QLKTKVVHLS (72 aa). The tract at residues 488–504 is important for nucleosome binding activity of the PRC2 complex; sequence TMPQKRLKRFDILNFPR.

This sequence belongs to the AEBP2/jing C2H2-type zinc-finger family. In terms of assembly, self-associates. Associates with the PRC2 complex, which consists of the core components EED, EZH1 or EZH2, SUZ12, and RBBP4, and various combinations of accessory subunits including AEBP2, JARID2, PHF19, MTF2 and EPOP. Found in a monomeric PRC2.2 (class 2) complex consisting of at least SUZ12, RBBP4, AEBP2 and JARID2. Within the PRC2 complex, interacts directly with SUZ12; competes with PHF19 for SUZ12 binding. Interacts with EED, EZH2, and RBBP4. May also interact with RBBP7. As to expression, expressed in brain, brown adipose tissue, white adipose tissue, heart, kidney, lung, skeletal muscle, small intestine and spleen. Expressed at low levels in liver.

The protein resides in the nucleus. Its function is as follows. Acts as an accessory subunit for the core Polycomb repressive complex 2 (PRC2), which mediates histone H3K27 (H3K27me3) trimethylation on chromatin leading to transcriptional repression of the affected target gene. Plays a role in nucleosome localization of the PRC2 complex. This is Zinc finger protein AEBP2 (Aebp2) from Mus musculus (Mouse).